Here is a 290-residue protein sequence, read N- to C-terminus: ATP synthase gamma chain (290 aa).

The protein belongs to the ATPase gamma chain family. In terms of assembly, F-type ATPases have 2 components, CF(1) - the catalytic core - and CF(0) - the membrane proton channel. CF(1) has five subunits: alpha(3), beta(3), gamma(1), delta(1), epsilon(1). CF(0) has three main subunits: a, b and c.

It localises to the cell inner membrane. Produces ATP from ADP in the presence of a proton gradient across the membrane. The gamma chain is believed to be important in regulating ATPase activity and the flow of protons through the CF(0) complex. The chain is ATP synthase gamma chain from Chlorobium luteolum (strain DSM 273 / BCRC 81028 / 2530) (Pelodictyon luteolum).